We begin with the raw amino-acid sequence, 213 residues long: Putative 3-methyladenine DNA glycosylase (213 aa).

Belongs to the DNA glycosylase MPG family.

In Paraburkholderia phytofirmans (strain DSM 17436 / LMG 22146 / PsJN) (Burkholderia phytofirmans), this protein is Putative 3-methyladenine DNA glycosylase.